Here is a 305-residue protein sequence, read N- to C-terminus: Aurasperone B biosynthesis cluster protein A (305 aa).

The signal sequence occupies residues 1 to 26; sequence MSIFFSIRFWPAAISAAILWLPQVLG. 8 N-linked (GlcNAc...) asparagine glycosylation sites follow: Asn29, Asn34, Asn64, Asn83, Asn132, Asn183, Asn218, and Asn288.

It belongs to the bfoA family.

Functionally, part of the gene cluster that mediates the biosynthesis of aurasperone B, a dimeric gamma-naphthopyrone. The first step in the biosynthesis of aurasperone B is the production of gamma-naphthopyrone precursor YWA1 by the non-reducing polyketide synthase albA, via condensation of one acetyl-CoA starter unit with 6 malonyl-CoA units. YWA1 is then methylated by aunE at position C-6 to yield foncesin which is further methylated at position C-8 by aunD to produce fonsecin B. A key enzyme in the biosynthetic pathway is the cytochrome P450 monooxygenase aunB which catalyzes the oxidative dimerization of fonsecin B to aurasperone B. AunB also catalyzes the oxidative dimerization of rubrofusarin B into aurasperone A. In Aspergillus niger (strain ATCC 1015 / CBS 113.46 / FGSC A1144 / LSHB Ac4 / NCTC 3858a / NRRL 328 / USDA 3528.7), this protein is Aurasperone B biosynthesis cluster protein A.